The following is a 199-amino-acid chain: Recombination protein RecR (199 aa).

The segment at 57-72 (CSICGNITEGDPCSIC) adopts a C4-type zinc-finger fold. The Toprim domain maps to 80–176 (THVLVVEQPK…KVTRLAHGLS (97 aa)).

It belongs to the RecR family.

Functionally, may play a role in DNA repair. It seems to be involved in an RecBC-independent recombinational process of DNA repair. It may act with RecF and RecO. This chain is Recombination protein RecR, found in Levilactobacillus brevis (strain ATCC 367 / BCRC 12310 / CIP 105137 / JCM 1170 / LMG 11437 / NCIMB 947 / NCTC 947) (Lactobacillus brevis).